The chain runs to 3313 residues: PHD finger protein rhinoceros (3313 aa).

Positions 1-16 are enriched in basic residues; the sequence is MSQRGKRGNQHHHQSH. The interval 1–136 is disordered; it reads MSQRGKRGNQ…QGASTSSSWQ (136 aa). Low complexity-rich tracts occupy residues 42–71 and 100–134; these read PPNG…ATGG and LGAA…TSSS. A PHD-type 1 zinc finger spans residues 323–373; the sequence is NVICDVCRSPDSEEANEMVFCDNCNICVHQACYGITAIPSGQWLCRTCSMG. The C2HC pre-PHD-type zinc-finger motif lies at 375-409; the sequence is TPDCVLCPNKAGAMKSNKSGKHWAHVSCALWIPEV. The PHD-type 2; degenerate zinc-finger motif lies at 433–487; it reads LVCVLCRKRVGSCIQCSKHSMSKGKKENAGGASGGGSASVTSSMHKANKYATGTG. 17 disordered regions span residues 453-526, 708-1076, 1107-1842, 1961-2033, 2104-2136, 2145-2164, 2219-2252, 2353-2374, 2398-2514, 2563-2587, 2647-2679, 2827-2871, 2888-2954, 2978-2998, 3017-3077, 3144-3233, and 3259-3313; these read MSKG…ARAQ, LQSG…TKAA, KEAK…PPSH, AQKE…TMGN, PVTA…RMQR, ARRS…PPAT, AAPQ…FNGG, PAYP…PAHP, VAAK…PPPM, TTRG…LHPV, ATGT…QPPA, SCGL…SSSR, LAGA…IKIR, YEMT…YSTP, DFDK…SATT, KAEK…SLPE, and YENS…CEVR. The span at 512-526 shows a compositional bias: basic and acidic residues; sequence KNDMTSEERNQARAQ. Residues 735–749 show a composition bias toward polar residues; that stretch reads KKLNNGAITSRTSSP. Low complexity predominate over residues 760 to 772; sequence STSTSTATATTAA. Polar residues predominate over residues 792-802; the sequence is GAATGTSTHNK. Low complexity-rich tracts occupy residues 803-861 and 894-912; these read TQSQ…ASGI and EAAA…ATSS. The segment covering 919–934 has biased composition (basic and acidic residues); that stretch reads QQRRRQEPERERDGRG. Residues 942-955 show a composition bias toward polar residues; sequence TVPNRTQPTKSKQS. Residues 956–972 show a composition bias toward low complexity; it reads TQADAGSGAGTGAAVET. Positions 994 to 1003 are enriched in acidic residues; the sequence is ESLSSDESEE. Positions 1015–1025 are enriched in low complexity; it reads AALSSGLAASG. Residues 1058–1072 are compositionally biased toward polar residues; it reads VESNVSDSQNQQTIR. Basic and acidic residues-rich tracts occupy residues 1159–1168 and 1178–1205; these read AADRMREPES and KLKD…KEQS. Residues 1250–1266 show a composition bias toward low complexity; the sequence is EAKSTAPAAKPTAAKTS. Over residues 1285–1301 the composition is skewed to polar residues; that stretch reads LKSSKPLQDTTFSTANE. Composition is skewed to low complexity over residues 1308–1324, 1377–1404, and 1451–1464; these read AATT…GVAT, SSSS…SGSD, and PAAS…AAAT. Over residues 1475 to 1485 the composition is skewed to polar residues; that stretch reads TARTRQNSTNK. The segment covering 1551 to 1579 has biased composition (basic and acidic residues); the sequence is SPEKQTARRKSRADESPKKIPNLEHEINQ. The span at 1638-1650 shows a compositional bias: acidic residues; the sequence is PVVEPEVETEIEP. Residues 1667–1678 show a composition bias toward polar residues; that stretch reads TAPTHTQLSANA. A compositionally biased stretch (pro residues) spans 1691–1702; it reads PAAPLPASPTPT. Basic residues predominate over residues 1722–1734; that stretch reads SRWRSRRRRRRRS. Residues 1744-1773 adopt a coiled-coil conformation; the sequence is HTQHLLNEMEMARELEEERKNELLANASKY. Residues 1753–1765 show a composition bias toward basic and acidic residues; that stretch reads EMARELEEERKNE. Composition is skewed to polar residues over residues 1771–1781 and 1796–1805; these read SKYSASTSSPA and DSNSANSGGD. Residues 1806–1819 show a composition bias toward low complexity; sequence QQQQQQQQPLPQQL. Residues 1823-1832 show a composition bias toward polar residues; that stretch reads SPSSEVASTI. The segment covering 1965-1984 has biased composition (low complexity); that stretch reads QQQQQQQQQQQQQQQQQQQQ. Composition is skewed to polar residues over residues 1985–1999 and 2007–2018; these read SCLY…SVAS and MTANSGSYANSL. The segment covering 2019 to 2033 has biased composition (low complexity); that stretch reads TNTPNATPTNATMGN. Over residues 2106–2118 the composition is skewed to polar residues; sequence TAQSGAGSNSNKL. 2 stretches are compositionally biased toward low complexity: residues 2148-2157 and 2222-2242; these read SSSPSSVSES and QQQT…QQQQ. The segment covering 2439–2451 has biased composition (pro residues); that stretch reads PVQPQPPTPPAPA. Residues 2479–2488 show a composition bias toward gly residues; sequence GSGGSGAPGR. Over residues 2658 to 2679 the composition is skewed to low complexity; sequence PAVSAAPVAPAPAPAANSQPPA. The segment covering 2891–2900 has biased composition (gly residues); it reads ASGGGAGTAS. Over residues 2909 to 2924 the composition is skewed to polar residues; the sequence is CSSGSNNDNNGKTGAA. The segment covering 2935–2946 has biased composition (basic and acidic residues); sequence KTLESSEDDHQT. A compositionally biased stretch (basic and acidic residues) spans 3017 to 3026; the sequence is DFDKGEENNK. The span at 3046–3065 shows a compositional bias: basic residues; sequence KRPKSSKPKKDKKEKKRQKQ. A compositionally biased stretch (polar residues) spans 3179-3198; it reads TSPQGLLLNSFTPHSQNANA. The span at 3268-3290 shows a compositional bias: low complexity; it reads SASGTGSASSNSCNSNSNNNNNN. Over residues 3291 to 3302 the composition is skewed to gly residues; that stretch reads GSGGGAASGGGS.

The protein belongs to the JADE family.

Its subcellular location is the nucleus. May function as a negative regulator of the EGFR/Ras/MAPK signaling pathway during eye development. This is PHD finger protein rhinoceros (rno) from Drosophila pseudoobscura pseudoobscura (Fruit fly).